We begin with the raw amino-acid sequence, 476 residues long: mRNA cap guanine-N(7) methyltransferase (476 aa).

The span at 1–14 (MANSTKAEEYEKMS) shows a compositional bias: basic and acidic residues. Positions 1–128 (MANSTKAEEY…TGDGTQNKRK (128 aa)) are disordered. The segment covering 20–50 (ASVNSEAESSFSINENTTASGTGLSGKTSVC) has biased composition (polar residues). Phosphoserine occurs at positions 24, 28, and 29. 3 stretches are compositionally biased toward basic and acidic residues: residues 54-68 (DTAR…DLVK), 84-93 (LDPEIVPEEK), and 107-117 (RETEDVPKDEY). The residue at position 118 (serine 118) is a Phosphoserine. The short motif at 126 to 128 (KRK) is the Nuclear localization signal element. Positions 167–475 (SRIFYLRNFN…IYLVFAFEKQ (309 aa)) constitute an mRNA cap 0 methyltransferase domain. Residue 176 to 177 (NN) participates in mRNA binding. 6 residues coordinate S-adenosyl-L-methionine: lysine 180, glycine 205, aspartate 227, aspartate 261, glutamine 284, and tyrosine 289.

It belongs to the class I-like SAM-binding methyltransferase superfamily. mRNA cap 0 methyltransferase family. As to quaternary structure, interacts with importin alpha, leading to stimulate both RNA-binding and methyltransferase activity. Interaction with importin alpha and beta is required for its nuclear localization, importin beta dissociating in response to RanGTP, allowing RNMT-importin alpha to bind RNA substrates. Interacts with elongating form of polymerase II and RNGTT. Interacts with RAMAC, this interaction significantly enhances RNA-binding and cap methyltransferase activity.

It is found in the nucleus. It catalyses the reaction a 5'-end (5'-triphosphoguanosine)-ribonucleoside in mRNA + S-adenosyl-L-methionine = a 5'-end (N(7)-methyl 5'-triphosphoguanosine)-ribonucleoside in mRNA + S-adenosyl-L-homocysteine. With respect to regulation, methyltransferase activity is activated by RAMAC. Its function is as follows. Catalytic subunit of the mRNA-capping methyltransferase RNMT:RAMAC complex that methylates the N7 position of the added guanosine to the 5'-cap structure of mRNAs. Binds RNA containing 5'-terminal GpppC. This Macaca fascicularis (Crab-eating macaque) protein is mRNA cap guanine-N(7) methyltransferase (RNMT).